Here is a 147-residue protein sequence, read N- to C-terminus: Phospholipase A2 SSD1043 (147 aa).

Positions 1–22 are cleaved as a signal peptide; the sequence is MSPKFMFFSIIAVWSCAAVTEA. The propeptide occupies 23–28; the sequence is LFIQHR. 5 cysteine pairs are disulfide-bonded: Cys-55–Cys-71, Cys-70–Cys-130, Cys-77–Cys-123, Cys-86–Cys-116, and Cys-109–Cys-121. Positions 56 and 58 each coordinate Ca(2+). The active site involves His-74. Residue Asp-75 coordinates Ca(2+). Asp-124 is a catalytic residue.

Ca(2+) is required as a cofactor. As to expression, expressed by the venom gland.

The protein localises to the secreted. The catalysed reaction is a 1,2-diacyl-sn-glycero-3-phosphocholine + H2O = a 1-acyl-sn-glycero-3-phosphocholine + a fatty acid + H(+). Its function is as follows. PLA2 catalyzes the calcium-dependent hydrolysis of the 2-acyl groups in 3-sn-phosphoglycerides. In Scolopendra dehaani (Thai centipede), this protein is Phospholipase A2 SSD1043.